We begin with the raw amino-acid sequence, 231 residues long: Orotidine 5'-phosphate decarboxylase (231 aa).

Substrate contacts are provided by residues D12, K34, 61–70 (DMKLLDIDNT), T116, R177, Q186, G206, and R207. K63 serves as the catalytic Proton donor.

The protein belongs to the OMP decarboxylase family. Type 1 subfamily. In terms of assembly, homodimer.

It catalyses the reaction orotidine 5'-phosphate + H(+) = UMP + CO2. Its pathway is pyrimidine metabolism; UMP biosynthesis via de novo pathway; UMP from orotate: step 2/2. Its function is as follows. Catalyzes the decarboxylation of orotidine 5'-monophosphate (OMP) to uridine 5'-monophosphate (UMP). This is Orotidine 5'-phosphate decarboxylase from Allorhizobium ampelinum (strain ATCC BAA-846 / DSM 112012 / S4) (Agrobacterium vitis (strain S4)).